The chain runs to 188 residues: MNIVLFGPPGCGKGTQSKRLVAERGWVQLSTGDMLRHARAAGTELGRRVAAIMDGGNLVSDAIVIELIEERLPEAKAAGGAIFDGFPRTVAQAQALDQLLLDRGTQVDSVIELKVNDEELVQRLVKRAEEEGRPDDTEDVIRKRLEVYYGQTAPLIPFFAQQGKVKAVDGMGSMDEVAAGIAAALEEK.

10–15 (GCGKGT) serves as a coordination point for ATP. Residues 30–59 (STGDMLRHARAAGTELGRRVAAIMDGGNLV) are NMP. AMP contacts are provided by residues threonine 31, arginine 36, 57-59 (NLV), 85-88 (GFPR), and glutamine 92. An LID region spans residues 126-136 (KRAEEEGRPDD). Arginine 127 lines the ATP pocket. AMP contacts are provided by arginine 133 and arginine 144. Glycine 172 contacts ATP.

Belongs to the adenylate kinase family. Monomer.

Its subcellular location is the cytoplasm. It catalyses the reaction AMP + ATP = 2 ADP. Its pathway is purine metabolism; AMP biosynthesis via salvage pathway; AMP from ADP: step 1/1. Its function is as follows. Catalyzes the reversible transfer of the terminal phosphate group between ATP and AMP. Plays an important role in cellular energy homeostasis and in adenine nucleotide metabolism. This chain is Adenylate kinase, found in Maricaulis maris (strain MCS10) (Caulobacter maris).